A 152-amino-acid chain; its full sequence is tRNA-specific adenosine deaminase (152 aa).

The region spanning 2 to 111 (AERTHFMELA…AQDPKGGAVE (110 aa)) is the CMP/dCMP-type deaminase domain. His-53 is a Zn(2+) binding site. Glu-55 acts as the Proton donor in catalysis. Zn(2+) is bound by residues Cys-83 and Cys-86.

This sequence belongs to the cytidine and deoxycytidylate deaminase family. Homodimer. Zn(2+) serves as cofactor.

The enzyme catalyses adenosine(34) in tRNA + H2O + H(+) = inosine(34) in tRNA + NH4(+). Catalyzes the deamination of adenosine to inosine at the wobble position 34 of tRNA(Arg2). The sequence is that of tRNA-specific adenosine deaminase from Agrobacterium fabrum (strain C58 / ATCC 33970) (Agrobacterium tumefaciens (strain C58)).